Reading from the N-terminus, the 186-residue chain is Dynactin subunit 3 (186 aa).

Position 2 is an N-acetylalanine (alanine 2).

The protein belongs to the dynactin subunit 3 family. As to quaternary structure, subunit of dynactin, a multiprotein complex part of a tripartite complex with dynein and a adapter, such as BICDL1, BICD2 or HOOK3. The dynactin complex is built around ACTR1A/ACTB filament and consists of an actin-related filament composed of a shoulder domain, a pointed end and a barbed end. Its length is defined by its flexible shoulder domain. The soulder is composed of 2 DCTN1 subunits, 4 DCTN2 and 2 DCTN3. The 4 DCNT2 (via N-terminus) bind the ACTR1A filament and act as molecular rulers to determine the length. The pointed end is important for binding dynein-dynactin cargo adapters. Consists of 4 subunits: ACTR10, DCNT4, DCTN5 and DCTN6. The barbed end is composed of a CAPZA1:CAPZB heterodimers, which binds ACTR1A/ACTB filament and dynactin and stabilizes dynactin.

Its subcellular location is the cytoplasm. The protein resides in the cytoskeleton. It is found in the microtubule organizing center. The protein localises to the centrosome. It localises to the chromosome. Its subcellular location is the centromere. The protein resides in the kinetochore. It is found in the spindle. The protein localises to the cleavage furrow. It localises to the midbody. Part of the dynactin complex that activates the molecular motor dynein for ultra-processive transport along microtubules. Together with dynein is involved in spindle assembly and cytokinesis. In Sus scrofa (Pig), this protein is Dynactin subunit 3.